The primary structure comprises 155 residues: Small ribosomal subunit protein uS7cz/uS7cy (155 aa).

Belongs to the universal ribosomal protein uS7 family. Part of the 30S ribosomal subunit.

The protein resides in the plastid. Its subcellular location is the chloroplast. In terms of biological role, one of the primary rRNA binding proteins, it binds directly to 16S rRNA where it nucleates assembly of the head domain of the 30S subunit. The sequence is that of Small ribosomal subunit protein uS7cz/uS7cy (rps7-A) from Cucumis sativus (Cucumber).